Here is a 399-residue protein sequence, read N- to C-terminus: Secreted RxLR effector protein 36 (399 aa).

The N-terminal stretch at 1-21 (MRGTIYVAIAILVAASSRSSA) is a signal peptide. Positions 50–71 (RILRESRGSNDKLAVGAGDEER) match the RxLR-dEER motif. An N-linked (GlcNAc...) asparagine glycan is attached at Asn-75. The interval 126 to 145 (IDPTPSNLGGQALHAPPNPD) is disordered.

It belongs to the RxLR effector family.

It localises to the secreted. The protein resides in the host nucleus. Functionally, secreted effector that completely suppresses the host cell death induced by cell death-inducing proteins. In Plasmopara viticola (Downy mildew of grapevine), this protein is Secreted RxLR effector protein 36.